The following is a 2079-amino-acid chain: Non-reducing polyketide synthase Dhc5 (2079 aa).

The segment at 9–246 (LLFGDVTDPW…DELNIHALQH (238 aa)) is N-terminal acylcarrier protein transacylase domain (SAT). One can recognise a Ketosynthase family 3 (KS3) domain in the interval 366-798 (NDGIAIVGMA…GGNACLLLED (433 aa)). Residues Cys-543, His-678, and His-717 each act as for beta-ketoacyl synthase activity in the active site. Residues 895–1199 (VFVFTGQGSH…MTHSLQPKTS (305 aa)) are malonyl-CoA:ACP transacylase (MAT) domain. Residue Ser-986 is the For acyl/malonyl transferase activity of the active site. An N-terminal hotdog fold region spans residues 1268 to 1414 (EPLISTCAQY…DPTRSQVEWD (147 aa)). In terms of domain architecture, PKS/mFAS DH spans 1268 to 1584 (EPLISTCAQY…YQELPRATWK (317 aa)). Residues 1304–1581 (MDGHKMQGIG…DIRYQELPRA (278 aa)) form a product template (PT) domain region. The tract at residues 1435–1584 (RGHRMQPEVF…YQELPRATWK (150 aa)) is C-terminal hotdog fold. The interval 1613-1639 (RELQQPSSATVPAQETTIDEPEQQEGE) is disordered. Residues 1615-1628 (LQQPSSATVPAQET) show a composition bias toward polar residues. The 78-residue stretch at 1641–1718 (AAGARLFNAI…DLRKEFRANE (78 aa)) folds into the Carrier domain. Residue Ser-1678 is modified to O-(pantetheine 4'-phosphoryl)serine. Residues 1721–1784 (VENPRFSATP…EQKRPVKIDD (64 aa)) are disordered. Positions 1727–1757 (SATPSSAEASIPSSPSSLAHPMSDSASSLSP) are enriched in low complexity. The span at 1758–1784 (SDREEALPLERQSMTKREQKRPVKIDD) shows a compositional bias: basic and acidic residues. Residues 1812–2057 (ADGTGTIATY…LSVAGDHLDL (246 aa)) form a thioesterase (TE) domain region. His-2064 functions as the For thioesterase activity in the catalytic mechanism.

Its pathway is mycotoxin biosynthesis. Highly reducing polyketide synthase; part of the gene cluster that mediates the biosynthesis of 10,11-dehydrocurvularin, a prevalent fungal phytotoxin with heat shock response and immune-modulatory activities. The highly reducing polyketide synthase Dhc3 is responsible for biosynthesis up to the tetraketide stage. The non-reducing polyketide synthase Dhc5 then conducts four additional chain extension cycles, producing the unreduced part of the nascent octaketide from C-1 to C-8 in 10,11-dehydrocurvularin. The protein is Non-reducing polyketide synthase Dhc5 of Alternaria cinerariae.